The sequence spans 123 residues: MELARPRSNFQSDLDFCPDCGSVLPLPGIQDTVICSRCGFSIDVRDCEGKVVKTSVVFNKLGATIPLSVDEGPELQGPVIDRRCPRCGHEGMAYHTRQMRSADEGQTVFYTCINCKFQEKEDS.

Zn(2+)-binding residues include Cys-17, Cys-20, Cys-35, Cys-38, Cys-84, and Cys-87. Residues 17-38 (CPDCGSVLPLPGIQDTVICSRC) form a C4-type zinc finger. The segment at 80–120 (IDRRCPRCGHEGMAYHTRQMRSADEGQTVFYTCINCKFQEK) adopts a TFIIS-type zinc-finger fold. Residues 103 to 104 (DE) carry the Hairpin motif. Cys-112 and Cys-115 together coordinate Zn(2+).

This sequence belongs to the archaeal RpoM/eukaryotic RPA12/RPB9/RPC11 RNA polymerase family. In terms of assembly, component of the RNA polymerase I (Pol I) complex consisting of 13 subunits: a ten-subunit catalytic core composed of POLR1A/RPA1, POLR1B/RPA2, POLR1C/RPAC1, POLR1D/RPAC2, POLR1H/RPA12, POLR2E/RPABC1, POLR2F/RPABC2, POLR2H/RPABC3, POLR2K/RPABC4 and POLR2L/RPABC5; a mobile stalk subunit POLR1F/RPA43 protruding from the core and additional subunits homologous to general transcription factors POLR1E/RPA49 and POLR1G/RPA34. Part of Pol I pre-initiation complex (PIC), in which Pol I core assembles with RRN3 and promoter-bound UTBF and SL1/TIF-IB complex.

The protein localises to the nucleus. It is found in the nucleolus. Core component of RNA polymerase I (Pol I), a DNA-dependent RNA polymerase which synthesizes ribosomal RNA precursors using the four ribonucleoside triphosphates as substrates. Can mediate Pol I proofreading of the nascent RNA transcript. Anchors into the Pol I active site to monitor transcription fidelity and cleave mis-incorporated 5'-ribonucleotides. In Mus musculus (Mouse), this protein is DNA-directed RNA polymerase I subunit RPA12.